The primary structure comprises 235 residues: Phosphoglycolate phosphatase (235 aa).

Asp14 serves as the catalytic Nucleophile. Positions 14, 16, and 177 each coordinate Mg(2+).

It belongs to the HAD-like hydrolase superfamily. CbbY/CbbZ/Gph/YieH family. It depends on Mg(2+) as a cofactor.

The catalysed reaction is 2-phosphoglycolate + H2O = glycolate + phosphate. It participates in organic acid metabolism; glycolate biosynthesis; glycolate from 2-phosphoglycolate: step 1/1. In terms of biological role, specifically catalyzes the dephosphorylation of 2-phosphoglycolate. Is involved in the dissimilation of the intracellular 2-phosphoglycolate formed during the DNA repair of 3'-phosphoglycolate ends, a major class of DNA lesions induced by oxidative stress. This chain is Phosphoglycolate phosphatase, found in Neisseria meningitidis serogroup A / serotype 4A (strain DSM 15465 / Z2491).